Here is a 431-residue protein sequence, read N- to C-terminus: Protein translocase subunit SecY (431 aa).

10 consecutive transmembrane segments (helical) span residues 18–38, 64–84, 116–136, 146–166, 175–195, 214–234, 262–282, 309–329, 369–389, and 390–410; these read IIFT…PVPH, LFNF…SIII, FTIV…NNMA, VGTY…LMWL, VGNG…PQTI, IIKV…VIFI, LPLK…AFIT, PVGM…YAFV, FVGS…VNIA, and GLPS…GVAL.

It belongs to the SecY/SEC61-alpha family. Component of the Sec protein translocase complex. Heterotrimer consisting of SecY, SecE and SecG subunits. The heterotrimers can form oligomers, although 1 heterotrimer is thought to be able to translocate proteins. Interacts with the ribosome. Interacts with SecDF, and other proteins may be involved. Interacts with SecA.

It localises to the cell membrane. Functionally, the central subunit of the protein translocation channel SecYEG. Consists of two halves formed by TMs 1-5 and 6-10. These two domains form a lateral gate at the front which open onto the bilayer between TMs 2 and 7, and are clamped together by SecE at the back. The channel is closed by both a pore ring composed of hydrophobic SecY resides and a short helix (helix 2A) on the extracellular side of the membrane which forms a plug. The plug probably moves laterally to allow the channel to open. The ring and the pore may move independently. This is Protein translocase subunit SecY from Bacillus licheniformis (strain ATCC 14580 / DSM 13 / JCM 2505 / CCUG 7422 / NBRC 12200 / NCIMB 9375 / NCTC 10341 / NRRL NRS-1264 / Gibson 46).